The following is a 235-amino-acid chain: Large ribosomal subunit protein uL1 (235 aa).

It belongs to the universal ribosomal protein uL1 family. As to quaternary structure, part of the 50S ribosomal subunit.

Functionally, binds directly to 23S rRNA. The L1 stalk is quite mobile in the ribosome, and is involved in E site tRNA release. Protein L1 is also a translational repressor protein, it controls the translation of the L11 operon by binding to its mRNA. The sequence is that of Large ribosomal subunit protein uL1 from Prochlorococcus marinus subsp. pastoris (strain CCMP1986 / NIES-2087 / MED4).